Consider the following 107-residue polypeptide: Nucleoid-associated protein Lferr_1592 (107 aa).

This sequence belongs to the YbaB/EbfC family. As to quaternary structure, homodimer.

It localises to the cytoplasm. It is found in the nucleoid. Functionally, binds to DNA and alters its conformation. May be involved in regulation of gene expression, nucleoid organization and DNA protection. The chain is Nucleoid-associated protein Lferr_1592 from Acidithiobacillus ferrooxidans (strain ATCC 53993 / BNL-5-31) (Leptospirillum ferrooxidans (ATCC 53993)).